Here is a 219-residue protein sequence, read N- to C-terminus: Phosphatidylserine decarboxylase proenzyme (219 aa).

Ser188 functions as the Schiff-base intermediate with substrate; via pyruvic acid in the catalytic mechanism. Ser188 carries the post-translational modification Pyruvic acid (Ser); by autocatalysis.

Belongs to the phosphatidylserine decarboxylase family. PSD-A subfamily. Heterodimer of a large membrane-associated beta subunit and a small pyruvoyl-containing alpha subunit. Pyruvate is required as a cofactor. Post-translationally, is synthesized initially as an inactive proenzyme. Formation of the active enzyme involves a self-maturation process in which the active site pyruvoyl group is generated from an internal serine residue via an autocatalytic post-translational modification. Two non-identical subunits are generated from the proenzyme in this reaction, and the pyruvate is formed at the N-terminus of the alpha chain, which is derived from the carboxyl end of the proenzyme. The post-translation cleavage follows an unusual pathway, termed non-hydrolytic serinolysis, in which the side chain hydroxyl group of the serine supplies its oxygen atom to form the C-terminus of the beta chain, while the remainder of the serine residue undergoes an oxidative deamination to produce ammonia and the pyruvoyl prosthetic group on the alpha chain.

It is found in the cell membrane. The catalysed reaction is a 1,2-diacyl-sn-glycero-3-phospho-L-serine + H(+) = a 1,2-diacyl-sn-glycero-3-phosphoethanolamine + CO2. It participates in phospholipid metabolism; phosphatidylethanolamine biosynthesis; phosphatidylethanolamine from CDP-diacylglycerol: step 2/2. In terms of biological role, catalyzes the formation of phosphatidylethanolamine (PtdEtn) from phosphatidylserine (PtdSer). This is Phosphatidylserine decarboxylase proenzyme from Ruegeria pomeroyi (strain ATCC 700808 / DSM 15171 / DSS-3) (Silicibacter pomeroyi).